Reading from the N-terminus, the 449-residue chain is Alginate biosynthesis transcriptional regulatory protein AlgB (449 aa).

The Response regulatory domain maps to 10-124 (RILLVDDESA…QLRLAAAKQL (115 aa)). Asp-59 carries the post-translational modification 4-aspartylphosphate. Positions 147–376 (LESHSPAMAA…LRNVIERASI (230 aa)) constitute a Sigma-54 factor interaction domain. ATP is bound by residues 175–182 (GESGSGKG) and 238–247 (ADGGTLFLDE). Residues 426-445 (LDQAAKTLGIDASTLYRKRK) constitute a DNA-binding region (H-T-H motif).

Phosphorylated by KinB.

It participates in glycan biosynthesis; alginate biosynthesis [regulation]. In terms of biological role, member of the two-component regulatory system AlgB/KinB involved in regulation of alginate biosynthesis genes. Positive regulator of the alginate biosynthetic gene AlgD. The polypeptide is Alginate biosynthesis transcriptional regulatory protein AlgB (algB) (Pseudomonas aeruginosa (strain ATCC 15692 / DSM 22644 / CIP 104116 / JCM 14847 / LMG 12228 / 1C / PRS 101 / PAO1)).